Consider the following 409-residue polypeptide: Isocitrate dehydrogenase [NADP] 1 (409 aa).

The NADP(+) site is built by K75, T78, T80, and R85. Residues D255, D278, and D282 each coordinate Mn(2+). NADP(+) is bound by residues G313, T314, V315, H318, and N331.

It belongs to the isocitrate and isopropylmalate dehydrogenases family. In terms of assembly, homodimer. Mg(2+) is required as a cofactor. Requires Mn(2+) as cofactor.

It carries out the reaction D-threo-isocitrate + NADP(+) = 2-oxoglutarate + CO2 + NADPH. Functionally, catalyzes the oxidative decarboxylation of isocitrate to 2-oxoglutarate and carbon dioxide with the concomitant reduction of NADP(+). This Mycobacterium bovis (strain ATCC BAA-935 / AF2122/97) protein is Isocitrate dehydrogenase [NADP] 1 (icd).